A 161-amino-acid polypeptide reads, in one-letter code: MNAYDVLKRHHTVLKGLGRKVGEAPVNSEERHVLFDEMLIELDIHFRIEDDLYYPALSAAGKPITGTHAEHRQVVDQLATLLRTPQRAPGYEEEWNVFRTVLEAHADVEERDMIPAPTPVHITDAELEELGDKMAARIEQLRGSPLYTLRTKGKADLLKAI.

This is an uncharacterized protein from Mycobacterium tuberculosis (strain CDC 1551 / Oshkosh).